Here is a 203-residue protein sequence, read N- to C-terminus: Glycerol-3-phosphate acyltransferase (203 aa).

Transmembrane regions (helical) follow at residues 6–26, 82–102, 118–138, and 141–161; these read LTLL…AVLV, AISL…PIFF, APIG…LVLI, and YSSL…WWLD.

Belongs to the PlsY family. As to quaternary structure, probably interacts with PlsX.

The protein resides in the cell inner membrane. It catalyses the reaction an acyl phosphate + sn-glycerol 3-phosphate = a 1-acyl-sn-glycero-3-phosphate + phosphate. It participates in lipid metabolism; phospholipid metabolism. Its function is as follows. Catalyzes the transfer of an acyl group from acyl-phosphate (acyl-PO(4)) to glycerol-3-phosphate (G3P) to form lysophosphatidic acid (LPA). This enzyme utilizes acyl-phosphate as fatty acyl donor, but not acyl-CoA or acyl-ACP. The chain is Glycerol-3-phosphate acyltransferase from Shewanella sp. (strain MR-7).